A 227-amino-acid chain; its full sequence is Large ribosomal subunit protein uL1 (227 aa).

This sequence belongs to the universal ribosomal protein uL1 family. As to quaternary structure, part of the 50S ribosomal subunit.

Binds directly to 23S rRNA. The L1 stalk is quite mobile in the ribosome, and is involved in E site tRNA release. Functionally, protein L1 is also a translational repressor protein, it controls the translation of the L11 operon by binding to its mRNA. This Tropheryma whipplei (strain TW08/27) (Whipple's bacillus) protein is Large ribosomal subunit protein uL1.